The primary structure comprises 371 residues: N-methyl-L-tryptophan oxidase (371 aa).

4-34 (DLIVIGSGSVGSAAGYYASQAGLNVLMIDSA) lines the FAD pocket. At Cys-307 the chain carries S-8alpha-FAD cysteine.

The protein belongs to the MSOX/MTOX family. MTOX subfamily. Monomer. The cofactor is FAD.

The catalysed reaction is N(alpha)-methyl-L-tryptophan + O2 + H2O = L-tryptophan + formaldehyde + H2O2. Its function is as follows. Catalyzes the oxidative demethylation of N-methyl-L-tryptophan. The chain is N-methyl-L-tryptophan oxidase from Yersinia pseudotuberculosis serotype O:1b (strain IP 31758).